Here is a 741-residue protein sequence, read N- to C-terminus: Catalase-peroxidase 2 (741 aa).

The first 28 residues, 1–28 (MQKKRVGKSVVAALAIIAMSAGTVAAWA), serve as a signal peptide directing secretion. The tryptophyl-tyrosyl-methioninium (Trp-Tyr) (with M-254) cross-link spans 107-228 (WHGAGTYRTY…LAATQMGLIY (122 aa)). Residue H108 is the Proton acceptor of the active site. Residues 228 to 254 (YVNPEGPNGNPDPVAAAKDIRDAFGRM) constitute a cross-link (tryptophyl-tyrosyl-methioninium (Tyr-Met) (with W-107)). A heme b-binding site is contributed by H269.

It belongs to the peroxidase family. Peroxidase/catalase subfamily. As to quaternary structure, homodimer or homotetramer. Requires heme b as cofactor. In terms of processing, formation of the three residue Trp-Tyr-Met cross-link is important for the catalase, but not the peroxidase activity of the enzyme.

The enzyme catalyses H2O2 + AH2 = A + 2 H2O. It carries out the reaction 2 H2O2 = O2 + 2 H2O. In terms of biological role, bifunctional enzyme with both catalase and broad-spectrum peroxidase activity. This chain is Catalase-peroxidase 2, found in Burkholderia ambifaria (strain ATCC BAA-244 / DSM 16087 / CCUG 44356 / LMG 19182 / AMMD) (Burkholderia cepacia (strain AMMD)).